The following is a 219-amino-acid chain: MERKGLAARSSGNPSPPALGEGPRPVPPPCVPSGGGAPERGQAGTAAEPAELIRRAHEFKSQGAQCYKDKKFREAIGKYHRALLELKGLLPSQEERDARPASSAGVPKSSRLSEEQSKTVEAIEIDCYNSLAACLLQAELVNYERVKEYCLKVLKKEGENFKALYRSGVAFYHLGDYDKALYYLKEARTRQPTDTNVIRYIQLTEMKLSRCSQREKEAM.

The interval 1-49 (MERKGLAARSSGNPSPPALGEGPRPVPPPCVPSGGGAPERGQAGTAAEP) is disordered. The stretch at 56–89 (AHEFKSQGAQCYKDKKFREAIGKYHRALLELKGL) is one TPR 1 repeat. The interval 94-115 (EERDARPASSAGVPKSSRLSEE) is disordered. Ser102 is subject to Phosphoserine. TPR repeat units lie at residues 125-160 (IDCYNSLAACLLQAELVNYERVKEYCLKVLKKEGEN) and 161-194 (FKALYRSGVAFYHLGDYDKALYYLKEARTRQPTD).

This sequence belongs to the TTC9 family.

This is Tetratricopeptide repeat protein 9A (Ttc9) from Mus musculus (Mouse).